A 418-amino-acid polypeptide reads, in one-letter code: MNIFEELKTRGLVFQTTDEQALVKALTEGQVSYYTGYDPTADSLHLGHLVAILTSRRLQLAGHKPYALVGGATGLIGDPSFKDAERSLQTKETVLEWSDKIKGQLSTFLDFENGDNKAELVNNYDWFSQISFIDFLRDVGKYFTVNYMMSKDSVKKRIETGISYTEFAYQIMQGYDFYELNDKHNVTLQIGGSDQWGNMTAGTELLRKKADKTGHVMTVPLITDSTGKKFGKSEGNAVWLDADKTSPYEMYQFWLNVMDDDAVRFLKIFTFLSLDEIAEIETQFNAARHERLAQKTLAREVVTLVHGEEAYKQALNITEQLFAGNIKNLSANELKQGLSNVPNYHVQSIDNHNIVEILVAAKISPSKRQAREDVQNGAIYINGDRVQDLDYQLSNDDKIDDQLTVIRRGKKKYAVLTY.

Tyrosine 34 serves as a coordination point for L-tyrosine. Positions 39-48 (PTADSLHLGH) match the 'HIGH' region motif. The L-tyrosine site is built by tyrosine 169 and glutamine 173. The short motif at 229–233 (KFGKS) is the 'KMSKS' region element. Lysine 232 contributes to the ATP binding site. The S4 RNA-binding domain occupies 352–418 (HNIVEILVAA…GKKKYAVLTY (67 aa)).

The protein belongs to the class-I aminoacyl-tRNA synthetase family. TyrS type 1 subfamily. Homodimer.

It is found in the cytoplasm. The enzyme catalyses tRNA(Tyr) + L-tyrosine + ATP = L-tyrosyl-tRNA(Tyr) + AMP + diphosphate + H(+). Its function is as follows. Catalyzes the attachment of tyrosine to tRNA(Tyr) in a two-step reaction: tyrosine is first activated by ATP to form Tyr-AMP and then transferred to the acceptor end of tRNA(Tyr). The chain is Tyrosine--tRNA ligase from Streptococcus pyogenes serotype M49 (strain NZ131).